Reading from the N-terminus, the 363-residue chain is uncharacterized protein (363 aa).

This is an uncharacterized protein from Methanocaldococcus jannaschii (strain ATCC 43067 / DSM 2661 / JAL-1 / JCM 10045 / NBRC 100440) (Methanococcus jannaschii).